The chain runs to 236 residues: 7-cyano-7-deazaguanine synthase (236 aa).

7–17 (CSGGLDSVTLA) is a binding site for ATP. Residues cysteine 185, cysteine 193, cysteine 196, and cysteine 199 each contribute to the Zn(2+) site.

This sequence belongs to the QueC family. Zn(2+) serves as cofactor.

The enzyme catalyses 7-carboxy-7-deazaguanine + NH4(+) + ATP = 7-cyano-7-deazaguanine + ADP + phosphate + H2O + H(+). Its pathway is purine metabolism; 7-cyano-7-deazaguanine biosynthesis. Catalyzes the ATP-dependent conversion of 7-carboxy-7-deazaguanine (CDG) to 7-cyano-7-deazaguanine (preQ(0)). This is 7-cyano-7-deazaguanine synthase from Rhizobium johnstonii (strain DSM 114642 / LMG 32736 / 3841) (Rhizobium leguminosarum bv. viciae).